The primary structure comprises 323 residues: Putative divalent cation/proton antiporter TMEM165 (323 aa).

A signal peptide spans 1–33 (MAASARGSGRAPTRRLLVLLLLPLLWAPAGVRA). Over 34-88 (GPEEDLSHRNQEPPAPAQQLQPQPAAVQGLEPARAEKGFTPAAPVHTNREDAATQ) the chain is Lumenal. Residues 35–44 (PEEDLSHRNQ) are compositionally biased toward basic and acidic residues. The segment at 35–60 (PEEDLSHRNQEPPAPAQQLQPQPAAV) is disordered. The segment covering 50–59 (AQQLQPQPAA) has biased composition (low complexity). The helical transmembrane segment at 89-109 (ANLGFIHAFVAAISVIIVSEL) threads the bilayer. Residues 110–126 (GDKTFFIAAIMAMRYNR) are Cytoplasmic-facing. The chain crosses the membrane as a helical span at residues 127–147 (LTVLAGAMLALALMTCLSVLF). Residues 148–151 (GYAT) are Lumenal-facing. Residues 152–172 (TVIPRVYTYYVSTALFAIFGI) traverse the membrane as a helical segment. The Cytoplasmic portion of the chain corresponds to 173–227 (RMLREGLKMSPDEGQEELEEVQAELKKKDEEFQRTKLLNGPDVETGTSTAIPQKK). Residues 184-211 (DEGQEELEEVQAELKKKDEEFQRTKLLN) adopt a coiled-coil conformation. A helical transmembrane segment spans residues 228–248 (WLHFISPIFVQALTLTFLAEW). Residues 249–266 (GDRSQLTTIVLAAREDPY) lie on the Lumenal side of the membrane. A helical transmembrane segment spans residues 267-287 (GVAVGGTVGHCLCTGLAVIGG). Topologically, residues 288–298 (RMIAQKISVRT) are cytoplasmic. Residues 299–319 (VTIIGGIVFLAFAFSALFISP) traverse the membrane as a helical segment. The Lumenal portion of the chain corresponds to 320–323 (ESGF).

The protein belongs to the GDT1 family.

It is found in the golgi apparatus membrane. It carries out the reaction Ca(2+)(in) + n H(+)(out) = Ca(2+)(out) + n H(+)(in). It catalyses the reaction Mn(2+)(in) + n H(+)(out) = Mn(2+)(out) + n H(+)(in). Putative divalent cation:proton antiporter that exchanges calcium or manganese ions for protons across the Golgi membrane. Mediates the reversible transport of calcium or manganese to the Golgi lumen driven by the proton gradient and possibly the membrane potential generated by V-ATPase. Provides calcium or manganese cofactors to resident Golgi enzymes and contributes to the maintenance of an acidic luminal Golgi pH required for proper functioning of the secretory pathway. Promotes Ca(2+) storage within the Golgi lumen of the mammary epithelial cells to be then secreted into milk. The transport mechanism and stoichiometry remains to be elucidated. The sequence is that of Putative divalent cation/proton antiporter TMEM165 from Rattus norvegicus (Rat).